A 307-amino-acid polypeptide reads, in one-letter code: Ribosomal RNA small subunit methyltransferase H (307 aa).

S-adenosyl-L-methionine is bound by residues 34–36 (GGH), D54, F79, D101, and Q108.

The protein belongs to the methyltransferase superfamily. RsmH family.

Its subcellular location is the cytoplasm. The enzyme catalyses cytidine(1402) in 16S rRNA + S-adenosyl-L-methionine = N(4)-methylcytidine(1402) in 16S rRNA + S-adenosyl-L-homocysteine + H(+). Specifically methylates the N4 position of cytidine in position 1402 (C1402) of 16S rRNA. In Ruthia magnifica subsp. Calyptogena magnifica, this protein is Ribosomal RNA small subunit methyltransferase H.